The following is a 366-amino-acid chain: Ferrochelatase (366 aa).

Fe cation is bound by residues H210 and E293.

The protein belongs to the ferrochelatase family.

The protein resides in the cytoplasm. It catalyses the reaction heme b + 2 H(+) = protoporphyrin IX + Fe(2+). It functions in the pathway porphyrin-containing compound metabolism; protoheme biosynthesis; protoheme from protoporphyrin-IX: step 1/1. Catalyzes the ferrous insertion into protoporphyrin IX. The polypeptide is Ferrochelatase (Leptospira borgpetersenii serovar Hardjo-bovis (strain JB197)).